A 120-amino-acid polypeptide reads, in one-letter code: Glutamate--tRNA ligase (120 aa).

The protein belongs to the class-I aminoacyl-tRNA synthetase family. Glutamate--tRNA ligase type 1 subfamily. Monomer.

The protein resides in the cytoplasm. The catalysed reaction is tRNA(Glu) + L-glutamate + ATP = L-glutamyl-tRNA(Glu) + AMP + diphosphate. Catalyzes the attachment of glutamate to tRNA(Glu) in a two-step reaction: glutamate is first activated by ATP to form Glu-AMP and then transferred to the acceptor end of tRNA(Glu). This Staphylococcus xylosus protein is Glutamate--tRNA ligase (gltX).